The following is a 254-amino-acid chain: Diphthine synthase (254 aa).

Residues Leu-11, Asp-87, Ile-90, 115-116 (SV), Leu-167, Leu-208, and His-233 each bind S-adenosyl-L-methionine.

Belongs to the diphthine synthase family. As to quaternary structure, homodimer.

The enzyme catalyses 2-[(3S)-amino-3-carboxypropyl]-L-histidyl-[translation elongation factor 2] + 3 S-adenosyl-L-methionine = diphthine-[translation elongation factor 2] + 3 S-adenosyl-L-homocysteine + 3 H(+). Its pathway is protein modification; peptidyl-diphthamide biosynthesis. In terms of biological role, S-adenosyl-L-methionine-dependent methyltransferase that catalyzes the trimethylation of the amino group of the modified target histidine residue in translation elongation factor 2 (EF-2), to form an intermediate called diphthine. The three successive methylation reactions represent the second step of diphthamide biosynthesis. The sequence is that of Diphthine synthase from Metallosphaera sedula (strain ATCC 51363 / DSM 5348 / JCM 9185 / NBRC 15509 / TH2).